Here is a 250-residue protein sequence, read N- to C-terminus: DNA repair protein RecO (250 aa).

The protein belongs to the RecO family.

Functionally, involved in DNA repair and RecF pathway recombination. This is DNA repair protein RecO from Rhodopseudomonas palustris (strain ATCC BAA-98 / CGA009).